The chain runs to 366 residues: Phenylalanine--tRNA ligase alpha subunit (366 aa).

E259 is a binding site for Mg(2+).

The protein belongs to the class-II aminoacyl-tRNA synthetase family. Phe-tRNA synthetase alpha subunit type 1 subfamily. In terms of assembly, tetramer of two alpha and two beta subunits. It depends on Mg(2+) as a cofactor.

It is found in the cytoplasm. It carries out the reaction tRNA(Phe) + L-phenylalanine + ATP = L-phenylalanyl-tRNA(Phe) + AMP + diphosphate + H(+). The protein is Phenylalanine--tRNA ligase alpha subunit of Novosphingobium aromaticivorans (strain ATCC 700278 / DSM 12444 / CCUG 56034 / CIP 105152 / NBRC 16084 / F199).